Consider the following 429-residue polypeptide: Phosphoribosylamine--glycine ligase (429 aa).

The region spanning 108 to 315 (KDFLARHRIP…LVLLVEAALA (208 aa)) is the ATP-grasp domain. Residue 134–195 (LHEQGAPIVI…EEFLDGEEAS (62 aa)) participates in ATP binding. Mg(2+) is bound by residues glutamate 285 and asparagine 287.

This sequence belongs to the GARS family. Requires Mg(2+) as cofactor. Mn(2+) is required as a cofactor.

The enzyme catalyses 5-phospho-beta-D-ribosylamine + glycine + ATP = N(1)-(5-phospho-beta-D-ribosyl)glycinamide + ADP + phosphate + H(+). Its pathway is purine metabolism; IMP biosynthesis via de novo pathway; N(1)-(5-phospho-D-ribosyl)glycinamide from 5-phospho-alpha-D-ribose 1-diphosphate: step 2/2. The sequence is that of Phosphoribosylamine--glycine ligase from Pseudomonas aeruginosa (strain ATCC 15692 / DSM 22644 / CIP 104116 / JCM 14847 / LMG 12228 / 1C / PRS 101 / PAO1).